We begin with the raw amino-acid sequence, 185 residues long: Prenylated Rab acceptor protein 1 (185 aa).

Topologically, residues 1–78 (MAVEKDQQKD…RNVEYYQSNY (78 aa)) are cytoplasmic. A required for interaction with prenylated RAB3A and VAMP2 region spans residues 30-54 (AGREWLERRRATIRSWGSFVDQRRF). The next 2 membrane-spanning stretches (helical) occupy residues 79 to 94 (VFVF…ATSP) and 95 to 112 (MLLV…ILYL). Topologically, residues 113–131 (RTLQSKFVLFGREVSPAHQ) are cytoplasmic. Transmembrane regions (helical) follow at residues 132-148 (YALA…LAGA) and 149-165 (GSAV…VIGS). Residues 165–185 (SHAAFHQIEAVDGEELQMEPV) form a required for interaction with GDI1 region. Topologically, residues 166 to 185 (HAAFHQIEAVDGEELQMEPV) are cytoplasmic. The required for interaction with prenylated RAB3A and VAMP2 stretch occupies residues 175–185 (VDGEELQMEPV). The interval 175 to 185 (VDGEELQMEPV) is homodimerization.

This sequence belongs to the PRA1 family. Homodimer. Interacts with VAMP2 (synaptobrevin-2), prenylated Rab proteins, GDI1, NDRG1 and PCLO.

It localises to the cell membrane. It is found in the cytoplasm. The protein localises to the golgi apparatus. Its subcellular location is the cytoplasmic vesicle. The protein resides in the secretory vesicle. It localises to the synaptic vesicle. Functionally, general Rab protein regulator required for vesicle formation from the Golgi complex. May control vesicle docking and fusion by mediating the action of Rab GTPases to the SNARE complexes. In addition it inhibits the removal of Rab GTPases from the membrane by GDI1. This Bos taurus (Bovine) protein is Prenylated Rab acceptor protein 1 (RABAC1).